The primary structure comprises 144 residues: Succinate dehydrogenase cytochrome b560 subunit (144 aa).

Transmembrane regions (helical) follow at residues 40–60, 84–104, and 124–144; these read IFHR…ILIL, GFLF…HLFA, and LTGY…WIIF. His-101 contributes to the heme binding site.

The protein belongs to the cytochrome b560 family. Forms part of complex II containing four subunits: a 70 kDa flavoprotein (FP), a 27 kDa iron-sulfur protein (IP), a cytochrome B and a membrane-anchoring protein. Heme is required as a cofactor.

Its subcellular location is the mitochondrion inner membrane. The protein operates within carbohydrate metabolism; tricarboxylic acid cycle. In terms of biological role, membrane-anchoring subunit of succinate dehydrogenase (SDH) that is involved in complex II of the mitochondrial electron transport chain and is responsible for transferring electrons from succinate to ubiquinone (coenzyme Q). This is Succinate dehydrogenase cytochrome b560 subunit (SDH3) from Reclinomonas americana.